Reading from the N-terminus, the 661-residue chain is Putative core protein L410 (661 aa).

Positions 1-11 (MADNKGRRDTF) are enriched in basic and acidic residues. Positions 1–26 (MADNKGRRDTFDVSGDTNTNATSNKR) are disordered. A compositionally biased stretch (polar residues) spans 15 to 25 (GDTNTNATSNK). Residues 112–140 (KKENKWSDKEYDEFRKELTNLLTGNRALE) are a coiled coil.

Its subcellular location is the virion. This is Putative core protein L410 from Acanthamoeba polyphaga (Amoeba).